Reading from the N-terminus, the 324-residue chain is Putative 12-oxophytodienoate reductase-like protein 1 (324 aa).

M1 carries the post-translational modification N-acetylmethionine. FMN contacts are provided by residues 14–16 (PMA), A47, and Q89. The span at 99 to 113 (QDCQPNGESPVSSTD) shows a compositional bias: polar residues. Residues 99-128 (QDCQPNGESPVSSTDKPFADDPSNEFTPPR) form a disordered region. 160–163 (HGAH) serves as a coordination point for substrate. The active-site Proton donor is the Y165. An FMN-binding site is contributed by R212. R252 is a binding site for substrate. FMN is bound by residues G282 and 303 to 304 (GR).

It belongs to the NADH:flavin oxidoreductase/NADH oxidase family. It depends on FMN as a cofactor.

Functionally, putative oxophytodienoate reductase that may be involved in the biosynthesis or metabolism of oxylipin signaling molecules. The sequence is that of Putative 12-oxophytodienoate reductase-like protein 1 from Arabidopsis thaliana (Mouse-ear cress).